Reading from the N-terminus, the 84-residue chain is Translational regulator CsrA (84 aa).

It belongs to the CsrA/RsmA family. In terms of assembly, homodimer; the beta-strands of each monomer intercalate to form a hydrophobic core, while the alpha-helices form wings that extend away from the core.

It localises to the cytoplasm. In terms of biological role, a translational regulator that binds mRNA to regulate translation initiation and/or mRNA stability. Usually binds in the 5'-UTR at or near the Shine-Dalgarno sequence preventing ribosome-binding, thus repressing translation. Its main target seems to be the major flagellin gene, while its function is anatagonized by FliW. The sequence is that of Translational regulator CsrA from Leptospira interrogans serogroup Icterohaemorrhagiae serovar Lai (strain 56601).